The sequence spans 223 residues: Endonuclease NucS (223 aa).

It belongs to the NucS endonuclease family.

It is found in the cytoplasm. Cleaves both 3' and 5' ssDNA extremities of branched DNA structures. This chain is Endonuclease NucS, found in Mycobacterium sp. (strain JLS).